Reading from the N-terminus, the 276-residue chain is NAD kinase (276 aa).

Asp67 (proton acceptor) is an active-site residue. NAD(+)-binding positions include Asp67–Gly68, Arg72, Asn136–Asp137, Lys147, Arg164, Asp166, Thr177–Ser182, Ala201, and Gln235.

It belongs to the NAD kinase family. A divalent metal cation serves as cofactor.

It localises to the cytoplasm. It catalyses the reaction NAD(+) + ATP = ADP + NADP(+) + H(+). Its function is as follows. Involved in the regulation of the intracellular balance of NAD and NADP, and is a key enzyme in the biosynthesis of NADP. Catalyzes specifically the phosphorylation on 2'-hydroxyl of the adenosine moiety of NAD to yield NADP. In Thermococcus sibiricus (strain DSM 12597 / MM 739), this protein is NAD kinase.